Reading from the N-terminus, the 427-residue chain is Trigger factor (427 aa).

A PPIase FKBP-type domain is found at 163-248 (GDTVILDFEG…LHEIKTKEVP (86 aa)).

The protein belongs to the FKBP-type PPIase family. Tig subfamily.

The protein resides in the cytoplasm. It catalyses the reaction [protein]-peptidylproline (omega=180) = [protein]-peptidylproline (omega=0). Involved in protein export. Acts as a chaperone by maintaining the newly synthesized protein in an open conformation. Functions as a peptidyl-prolyl cis-trans isomerase. The sequence is that of Trigger factor from Listeria welshimeri serovar 6b (strain ATCC 35897 / DSM 20650 / CCUG 15529 / CIP 8149 / NCTC 11857 / SLCC 5334 / V8).